Reading from the N-terminus, the 370-residue chain is Phosphoserine aminotransferase (370 aa).

Methionine 1 bears the N-acetylmethionine mark. The O-phospho-L-serine site is built by histidine 44 and arginine 45. Lysine 51 carries the N6-acetyllysine modification. Glycine 79 and tryptophan 107 together coordinate pyridoxal 5'-phosphate. At lysine 127 the chain carries N6-acetyllysine. Pyridoxal 5'-phosphate contacts are provided by threonine 156, aspartate 176, and glutamine 199. The residue at position 200 (lysine 200) is an N6-(pyridoxal phosphate)lysine. Positions 241 and 242 each coordinate pyridoxal 5'-phosphate. 3 positions are modified to N6-acetyllysine: lysine 269, lysine 318, and lysine 323. Serine 331 carries the phosphoserine modification. Lysine 333 carries the N6-acetyllysine modification. Positions 335, 336, and 342 each coordinate O-phospho-L-serine.

This sequence belongs to the class-V pyridoxal-phosphate-dependent aminotransferase family. SerC subfamily. In terms of assembly, homodimer. Pyridoxal 5'-phosphate is required as a cofactor.

It carries out the reaction O-phospho-L-serine + 2-oxoglutarate = 3-phosphooxypyruvate + L-glutamate. Its pathway is amino-acid biosynthesis; L-serine biosynthesis; L-serine from 3-phospho-D-glycerate: step 2/3. Functionally, involved in L-serine biosynthesis via the phosphorylated pathway, a three-step pathway converting the glycolytic intermediate 3-phospho-D-glycerate into L-serine. Catalyzes the second step, that is the pyridoxal 5'-phosphate-dependent transamination of 3-phosphohydroxypyruvate and L-glutamate to O-phosphoserine (OPS) and alpha-ketoglutarate. This is Phosphoserine aminotransferase from Mus musculus (Mouse).